The following is a 172-amino-acid chain: Large ribosomal subunit protein uL10 (172 aa).

The protein belongs to the universal ribosomal protein uL10 family. As to quaternary structure, part of the ribosomal stalk of the 50S ribosomal subunit. The N-terminus interacts with L11 and the large rRNA to form the base of the stalk. The C-terminus forms an elongated spine to which L12 dimers bind in a sequential fashion forming a multimeric L10(L12)X complex.

In terms of biological role, forms part of the ribosomal stalk, playing a central role in the interaction of the ribosome with GTP-bound translation factors. This is Large ribosomal subunit protein uL10 (rplJ) from Liberibacter africanus (Citrus greening disease).